Reading from the N-terminus, the 298-residue chain is MIVNIKEDSIMELRDLQIFQSVADQGSVSSAAKELNYVQSNVTARIKQLENELKTPLFYRHKRGMTLTAEGRKMLVYVHKILQDVDELKQVFLDSETPSGILKIGTVETVSTLPTILSSYYKSYPNVDLSLQAGLTEELIREVLDHQLDGAFISGPIKHPLIEQYDVSTEKLMLVTQNKAFHIEEFTTTPLLVFNQGCGYRSKLERWLKDEGLLPKRIMEFNILETILNSVALGLGITLVPQSAVHHLSKAGKVHCHAIPEKYGSISTVFIRRKDSYMTNSMRSFLKTIEEHHHINML.

Residues 11-68 (MELRDLQIFQSVADQGSVSSAAKELNYVQSNVTARIKQLENELKTPLFYRHKRGMTLT) form the HTH lysR-type domain. Residues 28-47 (VSSAAKELNYVQSNVTARIK) constitute a DNA-binding region (H-T-H motif).

The protein belongs to the LysR transcriptional regulatory family.

This Bacillus thuringiensis (strain Al Hakam) protein is HTH-type transcriptional regulator CzcR (czcR).